We begin with the raw amino-acid sequence, 578 residues long: Keratin, type II cytoskeletal 1b (578 aa).

The interval 1 to 163 (MSHQFSSQSA…DPEIQRIKTQ (163 aa)) is head. Arg95 carries the post-translational modification Omega-N-methylarginine. Residues 164–200 (EREQIMVLNNKFASFIDKVRFLEQQNQVLQTKWELLQ) form a coil 1A region. Residues 164 to 477 (EREQIMVLNN…QLLEGEESRM (314 aa)) form the IF rod domain. The tract at residues 201 to 219 (QVNTSTGTNNLEPLLENYI) is linker 1. Residues 220 to 311 (GDLRRQVDLL…LFLTELSQVQ (92 aa)) are coil 1B. The segment at 312 to 335 (THISDTNVILSMDNNRSLDLDSII) is linker 12. The coil 2 stretch occupies residues 336–474 (DAVRTQYELI…TYRQLLEGEE (139 aa)). A tail region spans residues 475 to 578 (SRMSGELQSH…TNTSHRRILE (104 aa)). Omega-N-methylarginine is present on Arg523. A compositionally biased stretch (gly residues) spans 547–556 (GSYGGSGRSG). The segment at 547–578 (GSYGGSGRSGRGSSRVQIIQTSTNTSHRRILE) is disordered. Residues 562–571 (VQIIQTSTNT) show a composition bias toward polar residues.

The protein belongs to the intermediate filament family. In terms of processing, undergoes deimination of some arginine residues (citrullination). Expressed exclusively in skin.

The sequence is that of Keratin, type II cytoskeletal 1b (KRT77) from Homo sapiens (Human).